Consider the following 498-residue polypeptide: ATP synthase subunit beta, chloroplastic (498 aa).

172–179 contacts ATP; that stretch reads GGAGVGKT.

It belongs to the ATPase alpha/beta chains family. In terms of assembly, F-type ATPases have 2 components, CF(1) - the catalytic core - and CF(0) - the membrane proton channel. CF(1) has five subunits: alpha(3), beta(3), gamma(1), delta(1), epsilon(1). CF(0) has four main subunits: a(1), b(1), b'(1) and c(9-12).

Its subcellular location is the plastid. It localises to the chloroplast thylakoid membrane. It catalyses the reaction ATP + H2O + 4 H(+)(in) = ADP + phosphate + 5 H(+)(out). Produces ATP from ADP in the presence of a proton gradient across the membrane. The catalytic sites are hosted primarily by the beta subunits. The sequence is that of ATP synthase subunit beta, chloroplastic from Elaeis oleifera (American oil palm).